A 385-amino-acid polypeptide reads, in one-letter code: MEFNDVLTNQPICIDNGSGVIKAGFAGEDQPKSFFPSYVGRPKHLKIMAGAIEGDIFIGNKAQELRGLLKIKYPIEHGIVVDWDDMERIWQFIYTEELKTVSEEHPVLLTEAPLNPRTNRDQAAQVFFETFNVPALFTSIQAVLSLYASGRTTGVVLDSGDGVTHAVPIYEGFAMPSAIRRIDIAGRDVTEYLQLLLRKSGTIFHTSAEKEIVRIIKEKCSYVTLDPRKEEKEWINASISGGKDYTKEEEFKLPDGNVLRLGAERFRAPEILFDPEIIGSEYSGIHQVVVDAISRVDLDLRKSLFGNIVLSGGSTLTRGFGDRLLSEIRRLAVKDVKIKIFAPPERKYSTWIGGSILASLSTFRKMWVSAEEYQEDPDIIHRKSI.

This sequence belongs to the actin family. ARP1 subfamily.

The protein localises to the cytoplasm. It localises to the cytoskeleton. The sequence is that of Actin-2 from Pneumocystis carinii.